The sequence spans 542 residues: CTP synthase (542 aa).

The amidoligase domain stretch occupies residues 1-265 (MPRYIFITGG…DTEILRCFGI (265 aa)). Residue Ser13 participates in CTP binding. Ser13 contributes to the UTP binding site. 14 to 19 (SLGKGL) contributes to the ATP binding site. Residue Tyr54 coordinates L-glutamine. Residue Asp71 coordinates ATP. 2 residues coordinate Mg(2+): Asp71 and Glu139. CTP is bound by residues 146 to 148 (DIE), 186 to 191 (KTKPTQ), and Lys222. UTP contacts are provided by residues 186 to 191 (KTKPTQ) and Lys222. 238 to 240 (RDA) serves as a coordination point for ATP. Residues 298 to 541 (YVGLLDAYKS…IAAALHQSRM (244 aa)) enclose the Glutamine amidotransferase type-1 domain. Gly353 contacts L-glutamine. Cys380 acts as the Nucleophile; for glutamine hydrolysis in catalysis. Residues 381 to 384 (YGMQ), Glu404, and Arg469 contribute to the L-glutamine site. Catalysis depends on residues His514 and Glu516.

The protein belongs to the CTP synthase family. Homotetramer.

The enzyme catalyses UTP + L-glutamine + ATP + H2O = CTP + L-glutamate + ADP + phosphate + 2 H(+). It catalyses the reaction L-glutamine + H2O = L-glutamate + NH4(+). It carries out the reaction UTP + NH4(+) + ATP = CTP + ADP + phosphate + 2 H(+). The protein operates within pyrimidine metabolism; CTP biosynthesis via de novo pathway; CTP from UDP: step 2/2. Allosterically activated by GTP, when glutamine is the substrate; GTP has no effect on the reaction when ammonia is the substrate. The allosteric effector GTP functions by stabilizing the protein conformation that binds the tetrahedral intermediate(s) formed during glutamine hydrolysis. Inhibited by the product CTP, via allosteric rather than competitive inhibition. Its function is as follows. Catalyzes the ATP-dependent amination of UTP to CTP with either L-glutamine or ammonia as the source of nitrogen. Regulates intracellular CTP levels through interactions with the four ribonucleotide triphosphates. This chain is CTP synthase, found in Maricaulis maris (strain MCS10) (Caulobacter maris).